The chain runs to 419 residues: Tyrosine--tRNA ligase (419 aa).

Tyrosine 34 is an L-tyrosine binding site. The short motif at proline 39–histidine 48 is the 'HIGH' region element. L-tyrosine is bound by residues tyrosine 168 and glutamine 172. Positions lysine 230–serine 234 match the 'KMSKS' region motif. Residue lysine 233 participates in ATP binding. The S4 RNA-binding domain maps to alanine 352–tyrosine 418.

The protein belongs to the class-I aminoacyl-tRNA synthetase family. TyrS type 1 subfamily. As to quaternary structure, homodimer.

Its subcellular location is the cytoplasm. The catalysed reaction is tRNA(Tyr) + L-tyrosine + ATP = L-tyrosyl-tRNA(Tyr) + AMP + diphosphate + H(+). Catalyzes the attachment of tyrosine to tRNA(Tyr) in a two-step reaction: tyrosine is first activated by ATP to form Tyr-AMP and then transferred to the acceptor end of tRNA(Tyr). The protein is Tyrosine--tRNA ligase of Listeria monocytogenes serovar 1/2a (strain ATCC BAA-679 / EGD-e).